A 181-amino-acid polypeptide reads, in one-letter code: Protein GrpE (181 aa).

The span at 1–12 shows a compositional bias: polar residues; that stretch reads MENTQENPTTPS. The tract at residues 1-33 is disordered; the sequence is MENTQENPTTPSAEDIGSEKQAAQGAAPAAEAA. Residues 21 to 33 show a composition bias toward low complexity; the sequence is QAAQGAAPAAEAA.

It belongs to the GrpE family. In terms of assembly, homodimer.

The protein resides in the cytoplasm. In terms of biological role, participates actively in the response to hyperosmotic and heat shock by preventing the aggregation of stress-denatured proteins, in association with DnaK and GrpE. It is the nucleotide exchange factor for DnaK and may function as a thermosensor. Unfolded proteins bind initially to DnaJ; upon interaction with the DnaJ-bound protein, DnaK hydrolyzes its bound ATP, resulting in the formation of a stable complex. GrpE releases ADP from DnaK; ATP binding to DnaK triggers the release of the substrate protein, thus completing the reaction cycle. Several rounds of ATP-dependent interactions between DnaJ, DnaK and GrpE are required for fully efficient folding. This Burkholderia cenocepacia (strain HI2424) protein is Protein GrpE.